Here is a 180-residue protein sequence, read N- to C-terminus: Ribulose bisphosphate carboxylase small subunit, chloroplastic 4 (180 aa).

The N-terminal 56 residues, 1 to 56, are a transit peptide targeting the chloroplast; that stretch reads MASSIVSSAAVATRGNGAQASMVAPFTGLKSTASFPVSRKQNLDITSIASNGGRVS.

It belongs to the RuBisCO small chain family. Heterohexadecamer of 8 large and 8 small subunits. In terms of assembly, (Microbial infection) Binds to tobamovirus movement protein; this interaction seems required for viral systemic movement.

The protein resides in the plastid. It localises to the chloroplast. It is found in the cell junction. The protein localises to the plasmodesma. RuBisCO catalyzes two reactions: the carboxylation of D-ribulose 1,5-bisphosphate, the primary event in carbon dioxide fixation, as well as the oxidative fragmentation of the pentose substrate. Both reactions occur simultaneously and in competition at the same active site. Although the small subunit is not catalytic it is essential for maximal activity. Involved in antiviral defenses. This chain is Ribulose bisphosphate carboxylase small subunit, chloroplastic 4, found in Solanum lycopersicum (Tomato).